The chain runs to 410 residues: Imidazolonepropionase (410 aa).

Fe(3+) contacts are provided by H73 and H75. Residues H73 and H75 each contribute to the Zn(2+) site. 4-imidazolone-5-propanoate-binding residues include R82, Y145, and H178. N-formimidoyl-L-glutamate is bound at residue Y145. Residue H243 coordinates Fe(3+). H243 lines the Zn(2+) pocket. Q246 contributes to the 4-imidazolone-5-propanoate binding site. D318 lines the Fe(3+) pocket. Zn(2+) is bound at residue D318. 2 residues coordinate N-formimidoyl-L-glutamate: N320 and G322. S323 contributes to the 4-imidazolone-5-propanoate binding site.

The protein belongs to the metallo-dependent hydrolases superfamily. HutI family. Requires Zn(2+) as cofactor. Fe(3+) is required as a cofactor.

Its subcellular location is the cytoplasm. It catalyses the reaction 4-imidazolone-5-propanoate + H2O = N-formimidoyl-L-glutamate. It participates in amino-acid degradation; L-histidine degradation into L-glutamate; N-formimidoyl-L-glutamate from L-histidine: step 3/3. Catalyzes the hydrolytic cleavage of the carbon-nitrogen bond in imidazolone-5-propanoate to yield N-formimidoyl-L-glutamate. It is the third step in the universal histidine degradation pathway. This chain is Imidazolonepropionase, found in Shewanella baltica (strain OS223).